Reading from the N-terminus, the 431-residue chain is REST corepressor 1 (431 aa).

Basic and acidic residues predominate over residues 1–10 (MIEKGAEISG). The segment at 1–53 (MIEKGAEISGKRRGRNNAANSKSLGTNVNGSNSWEEGSSSSSSDDEPGGGGMR) is disordered. The segment covering 17–28 (NAANSKSLGTNV) has biased composition (polar residues). Positions 29-42 (NGSNSWEEGSSSSS) are enriched in low complexity. One can recognise an ELM2 domain in the interval 50–135 (GGMRVGLQYQ…KSLADLLNFT (86 aa)). Residues 136–187 (PFPDEWTVEDRVLFEQAFSFHGKTFHRIQQMLPDKSIASLVKFYYSWKKTRS) form the SANT 1 domain. The interval 190-262 (SVMDRHARKQ…NRAKRKPPNG (73 aa)) is disordered. Basic and acidic residues predominate over residues 224–242 (EQPKEAKKEVPKNDTVPHI). A coiled-coil region spans residues 267-314 (QEDVEAVSANANAATTVLRQLDMELVSIKRQIQNIKQTNSAFKEKLQG). The region spanning 327–378 (KFNARWTTEEQLLAVQAIRMYGRDFQAISDVIGNKSVVQVKNFFVNYRRRFN) is the SANT 2 domain.

Belongs to the CoREST family. Component of a BHC histone deacetylase complex that contains KDM1A. Expressed in territories in which neurogenesis takes place.

It is found in the nucleus. In terms of biological role, essential component of the BHC complex, a corepressor complex that represses transcription of neuron-specific genes in non-neuronal cells. The BHC complex is recruited at RE1/NRSE sites by REST and acts by deacetylating and demethylating specific sites on histones, thereby acting as a chromatin modifier. In the BHC complex, it serves as a molecular beacon for the recruitment of molecular machinery that imposes silencing across a chromosomal interval. Plays a central role in demethylation of Lys-4 of histone H3 by promoting demethylase activity of KDM1A on core histones and nucleosomal substrates. This chain is REST corepressor 1 (rcor1), found in Xenopus laevis (African clawed frog).